Here is a 247-residue protein sequence, read N- to C-terminus: Probable transcriptional regulatory protein Asuc_1803 (247 aa).

This sequence belongs to the TACO1 family.

The protein localises to the cytoplasm. The sequence is that of Probable transcriptional regulatory protein Asuc_1803 from Actinobacillus succinogenes (strain ATCC 55618 / DSM 22257 / CCUG 43843 / 130Z).